A 362-amino-acid chain; its full sequence is Protein indeterminate-domain 16 (362 aa).

A disordered region spans residues 1–22 (MELTQPIRENGDPQGHQLTDPD). 2 consecutive C2H2-type zinc fingers follow at residues 39–61 (YVCE…RRRH) and 82–112 (YVCP…RRKH). The CCHC-type 1; atypical zinc finger occupies 118–142 (WVCERCSKGYAVQSDYKAHLKTCGS). The Zn(2+) site is built by Cys-120, Cys-123, His-136, Cys-140, Cys-147, Cys-149, His-162, and Cys-166. A CCHC-type 2; atypical zinc finger spans residues 145-168 (HSCDCGRVFSRVESFIEHQDTCTI). Residues 155 to 167 (RVESFIEHQDTCT) form an SHR-binding region. Positions 247–278 (SAQARHNEKRETSLTKERANEEARKAEETRQE) are disordered. Over residues 251–278 (RHNEKRETSLTKERANEEARKAEETRQE) the composition is skewed to basic and acidic residues. Residues 252–319 (HNEKRETSLT…VREEAIKRIN (68 aa)) adopt a coiled-coil conformation.

In terms of tissue distribution, highly expressed in leaves, hypocotyls, roots, vasculature of cotyledons, floral organs and in the endodermis and vasculaturenof inflorescence stems.

It localises to the nucleus. In terms of biological role, transcription factor regulating lateral organ morphogenesis and gravitropic responses. Has a redundant role with IDD14 in directing leaf and floral organ morphogenesis. Acts cooperatively with IDD15 to control silique and branche orientation. Involved in the establishment of auxin gradients through the regulation of auxin biosynthesis and transport. This chain is Protein indeterminate-domain 16, found in Arabidopsis thaliana (Mouse-ear cress).